The sequence spans 203 residues: Protein shisa-like-1a (203 aa).

An N-terminal signal peptide occupies residues 1 to 25 (MIMNGRWSFNTLAIIFILLSTAALS). The Extracellular segment spans residues 26-97 (AHFRVCEPYS…SDSFAHNNYT (72 aa)). Asn-53, Asn-63, Asn-72, Asn-83, and Asn-95 each carry an N-linked (GlcNAc...) asparagine glycan. A helical transmembrane segment spans residues 98–118 (ALIGVWIYGFFVMVLLALDFL). At 119-203 (YYSAMNYELC…LLSFQTSTAW (85 aa)) the chain is on the cytoplasmic side. The tract at residues 157 to 191 (ELNTGPGLSQQQQLHLHHHHHHHHPRHSLRGDTQS) is disordered. Low complexity predominate over residues 161–170 (GPGLSQQQQL). A compositionally biased stretch (basic residues) spans 171–184 (HLHHHHHHHHPRHS).

This sequence belongs to the shisa family.

Its subcellular location is the membrane. The sequence is that of Protein shisa-like-1a (shisal1a) from Danio rerio (Zebrafish).